The following is a 185-amino-acid chain: MMTVTAQQQAELIKNSIKSIPDYPKPGILFRDVTSLLEDPVAYAASIEMLANRYRNSGVTKVVGTEARGFLFGAPVALALGVGFVPVRKPGKLPRPTISESYELEYGSDTLEIHSDAISAGDNVLVIDDLLATGGTLEATVKLIRRLGGTVNDAAFIINLFDLGGEQRLTGMGVTCYSLVDFPGH.

This sequence belongs to the purine/pyrimidine phosphoribosyltransferase family. Homodimer.

It is found in the cytoplasm. It catalyses the reaction AMP + diphosphate = 5-phospho-alpha-D-ribose 1-diphosphate + adenine. The protein operates within purine metabolism; AMP biosynthesis via salvage pathway; AMP from adenine: step 1/1. In terms of biological role, catalyzes a salvage reaction resulting in the formation of AMP, that is energically less costly than de novo synthesis. This chain is Adenine phosphoribosyltransferase, found in Pectobacterium carotovorum subsp. carotovorum (strain PC1).